The primary structure comprises 184 residues: UPF0149 protein PSPTO_5224 (184 aa).

The protein belongs to the UPF0149 family.

This chain is UPF0149 protein PSPTO_5224, found in Pseudomonas syringae pv. tomato (strain ATCC BAA-871 / DC3000).